The chain runs to 93 residues: MGKLDETMFFDFGDNKQNDVRETLKTVYDALEEKGYNPIDQIVGYLISGDPAYIPRLNDARNLIRKHQRDEIIEELVRYYLSEQIADSKKEEN.

Belongs to the UPF0297 family.

The protein is UPF0297 protein PEPE_1262 of Pediococcus pentosaceus (strain ATCC 25745 / CCUG 21536 / LMG 10740 / 183-1w).